We begin with the raw amino-acid sequence, 449 residues long: Hyaluronidase-2 (449 aa).

The N-terminal stretch at 1–23 (MYHLWIKCLAAWIFLKRCNGVHA) is a signal peptide. 2 cysteine pairs are disulfide-bonded: C47-C340 and C211-C227. N-linked (GlcNAc...) asparagine glycosylation is found at N67, N103, and N111. Residue E135 is the Proton donor of the active site. N-linked (GlcNAc...) asparagine glycosylation is present at N153. A glycan (N-linked (GlcNAc...) asparagine) is linked at N357. Disulfide bonds link C365–C376, C370–C427, and C429–C438. N401 carries an N-linked (GlcNAc...) asparagine glycan. An EGF-like domain is found at 427 to 438 (CQCYQGWKGLYC).

Belongs to the glycosyl hydrolase 56 family. In terms of assembly, monomer. Expressed by the venom gland.

It is found in the secreted. It carries out the reaction Random hydrolysis of (1-&gt;4)-linkages between N-acetyl-beta-D-glucosamine and D-glucuronate residues in hyaluronate.. Functionally, snake venom endo-hyaluronidase that degrades hyaluronan to smaller oligosaccharide fragments. In venom, it is not toxic by itself, but increases the diffusion of other venom proteins by degrading the extracellular matrix. In addition, it displays antiedematogenic activity. The polypeptide is Hyaluronidase-2 (Bitis arietans (African puff adder)).